Reading from the N-terminus, the 152-residue chain is Transcriptional repressor NrdR (152 aa).

The segment at 3-34 (CPFCNHGELKVIDSRNAPEANAIKRRRECLNC) is a zinc-finger region. The region spanning 48–138 (LQVLKRDGRY…VYRRFKDVGE (91 aa)) is the ATP-cone domain.

Belongs to the NrdR family. Requires Zn(2+) as cofactor.

Its function is as follows. Negatively regulates transcription of bacterial ribonucleotide reductase nrd genes and operons by binding to NrdR-boxes. The protein is Transcriptional repressor NrdR of Chlamydia abortus (strain DSM 27085 / S26/3) (Chlamydophila abortus).